Here is a 305-residue protein sequence, read N- to C-terminus: UDP-3-O-acyl-N-acetylglucosamine deacetylase (305 aa).

Residues H78, H237, and D241 each coordinate Zn(2+). H264 (proton donor) is an active-site residue.

It belongs to the LpxC family. It depends on Zn(2+) as a cofactor.

It catalyses the reaction a UDP-3-O-[(3R)-3-hydroxyacyl]-N-acetyl-alpha-D-glucosamine + H2O = a UDP-3-O-[(3R)-3-hydroxyacyl]-alpha-D-glucosamine + acetate. The protein operates within glycolipid biosynthesis; lipid IV(A) biosynthesis; lipid IV(A) from (3R)-3-hydroxytetradecanoyl-[acyl-carrier-protein] and UDP-N-acetyl-alpha-D-glucosamine: step 2/6. In terms of biological role, catalyzes the hydrolysis of UDP-3-O-myristoyl-N-acetylglucosamine to form UDP-3-O-myristoylglucosamine and acetate, the committed step in lipid A biosynthesis. This Burkholderia ambifaria (strain MC40-6) protein is UDP-3-O-acyl-N-acetylglucosamine deacetylase.